Reading from the N-terminus, the 204-residue chain is MKDKVRVPFSPDHPSCAPKLFTISAPAGAGKTTLVRMLAQEFPDSFQKTLSLTTRAPRPEEVSGIDYWFVSQEEFKQRLDSNNFLEWVLLFGEYYGTSRLEIDEIWKSGKHAVAVIDVEGALSLKSKIPTVTIFISAPSQEELERRLKYRGSEQDSQRQERLQHSLIEQAASNQFEYVIINDDLQKSYEILKSIFIAEEHRNVL.

Residues 18–196 enclose the Guanylate kinase-like domain; it reads PKLFTISAPA…SYEILKSIFI (179 aa). ATP is bound at residue 25 to 32; the sequence is APAGAGKT.

This sequence belongs to the guanylate kinase family.

Its subcellular location is the cytoplasm. The enzyme catalyses GMP + ATP = GDP + ADP. Functionally, essential for recycling GMP and indirectly, cGMP. The protein is Guanylate kinase of Chlamydia caviae (strain ATCC VR-813 / DSM 19441 / 03DC25 / GPIC) (Chlamydophila caviae).